The sequence spans 428 residues: Dihydroorotase (428 aa).

The Zn(2+) site is built by histidine 59 and histidine 61. Substrate-binding positions include 61–63 (HFR) and asparagine 93. Zn(2+) contacts are provided by aspartate 151, histidine 178, and histidine 231. Asparagine 277 lines the substrate pocket. Aspartate 304 contacts Zn(2+). Residue aspartate 304 is part of the active site. Residues histidine 308 and 322–323 (FG) contribute to the substrate site.

It belongs to the metallo-dependent hydrolases superfamily. DHOase family. Class I DHOase subfamily. In terms of assembly, homodimer. The cofactor is Zn(2+).

The enzyme catalyses (S)-dihydroorotate + H2O = N-carbamoyl-L-aspartate + H(+). The protein operates within pyrimidine metabolism; UMP biosynthesis via de novo pathway; (S)-dihydroorotate from bicarbonate: step 3/3. Its function is as follows. Catalyzes the reversible cyclization of carbamoyl aspartate to dihydroorotate. The chain is Dihydroorotase from Bacillus subtilis (strain 168).